Consider the following 809-residue polypeptide: MSGPKLDRTPSIRDRVEDTLHAHRNELVALLSKYVSQGKGILQPHHILDALDEVQSSGGRALVEGPFLDVLRSAQEAIVLPPFVAIAVRPRPGVWEYVRVNVHELSVEQLTVSEYLRFKEELVDGQYNDPYILELDFEPFNASVPRPNRSSSIGNGVQFLNRHLSSIMFRNKDCLEPLLDFLRGHRHKGHVMMLNDRIQSLGRLQSVLTKAEEHLSKLPADTPYSQFAYKFQEWGLEKGWGDTAGYVLEMIHLLLDVLQAPDPSTLETFLGRIPMIFNVVVVSPHGYFGQANVLGLPDTGGQIVYILDQVRALENEMVLRLKKQGLDFTPKILIVTRLIPEAKGTSCNQRLERISGTQHTYILRVPFRNENGILRKWISRFDVWPYLEKFAEDAAGEIAAELQGTPDFIIGNYSDGNLVASLLSYKMGITQCNIAHALEKTKYPDSDIYWTKYDEKYHFSCQFTADIIAMNNADFIITSTYQEIAGSKNTVGQYESHTAFTLPGLYRIVHGIDVFDPKFNIVSPGADMSIYFPYTEKAKRLTSLHGSLENLISDPEQNDEHIGHLDDRSKPILFSMARLDRVKNITGLVEAYAKNARLRELVNLVVVAGYNDVKKSKDREEIAEIEKMHELIKTYNLFGQFRWISAQTNRARNGELYRYIADTHGAFVQPAFYEAFGLTVVEAMTCGLPTFATVHGGPAEIIEHGISGFHIDPYHPDQAANLIADFFEQCKQDPNHWVEVSNRGLQRIYEKYTWKIYSERLMTLAGVYGFWKYVSKLERRETRRYLEMFYILKFRELAKTVPLAVDEAH.

Positions 275–753 (MIFNVVVVSP…GLQRIYEKYT (479 aa)) are GT-B glycosyltransferase.

This sequence belongs to the glycosyltransferase 1 family. Plant sucrose synthase subfamily. As to expression, predominantly expressed in the leaf tissues and in caryopses.

It catalyses the reaction an NDP-alpha-D-glucose + D-fructose = a ribonucleoside 5'-diphosphate + sucrose + H(+). In terms of biological role, sucrose-cleaving enzyme that provides UDP-glucose and fructose for various metabolic pathways. The protein is Sucrose synthase 4 (SUS4) of Oryza sativa subsp. japonica (Rice).